Consider the following 807-residue polypeptide: Centrosomal protein of 97 kDa (807 aa).

7 LRR repeats span residues 34-55 (DTQT…EKCR), 56-77 (NLVQ…AKLI), 78-99 (HLRV…KDLV), 100-121 (HLEW…NSST), 122-143 (SLQH…SKLK), 144-165 (SLKT…SACL), and 168-189 (SLTI…AFLA). Positions 208 to 246 (TPSIPGFDYRPFIVSWCLNLKVLDGYVVSQKESLKAEWL) constitute an LRRCT domain. Residues 306–330 (RSDGYLTSSTPNKRLPLSTEHHSPT) are disordered. The IQ domain maps to 519-548 (ISKAATKLQSCWRGFYARKYNPKVKDVCYE). The span at 607-623 (TANSSENDLPSASNSKH) shows a compositional bias: polar residues. The segment at 607-756 (TANSSENDLP…RPEITTCSDN (150 aa)) is disordered. Residues 681 to 690 (TGRHYNDKVP) show a composition bias toward basic and acidic residues. Residues 704 to 724 (SQSSKDSFTSEQDSSLLQQYL) show a composition bias toward polar residues.

It localises to the cytoplasm. The protein localises to the cytoskeleton. It is found in the microtubule organizing center. Its subcellular location is the centrosome. Its function is as follows. Acts as a key negative regulator of ciliogenesis in collaboration with ccp110 by capping the mother centriole thereby preventing cilia formation. Required for recruitment of ccp110 to the centrosome. This chain is Centrosomal protein of 97 kDa (cep97), found in Xenopus laevis (African clawed frog).